Here is a 367-residue protein sequence, read N- to C-terminus: tRNA (cytosine(34)-C(5))-methyltransferase, mitochondrial (367 aa).

S-adenosyl-L-methionine contacts are provided by residues 170–176 (CAAPGGK), Glu193, Asp224, and Asp242. The active-site Nucleophile is the Cys296.

It belongs to the class I-like SAM-binding methyltransferase superfamily. RsmB/NOP family.

The protein localises to the mitochondrion matrix. The catalysed reaction is cytidine(34) in mitochondrial tRNA + S-adenosyl-L-methionine = 5-methylcytidine(34) in mitochondrial tRNA + S-adenosyl-L-homocysteine + H(+). In terms of biological role, mitochondrial tRNA methyltransferase that mediates methylation of cytosine to 5-methylcytosine (m5C) at position 34 of mt-tRNA(Met). mt-tRNA(Met) methylation at cytosine(34) takes place at the wobble position of the anticodon and initiates the formation of 5-formylcytosine (f(5)c) at this position. mt-tRNA(Met) containing the f(5)c modification at the wobble position enables recognition of the AUA codon in addition to the AUG codon, expanding codon recognition in mitochondrial translation. The chain is tRNA (cytosine(34)-C(5))-methyltransferase, mitochondrial from Danio rerio (Zebrafish).